The sequence spans 460 residues: A-type ATP synthase subunit B (460 aa).

The protein belongs to the ATPase alpha/beta chains family. Has multiple subunits with at least A(3), B(3), C, D, E, F, H, I and proteolipid K(x).

The protein localises to the cell membrane. Its function is as follows. Component of the A-type ATP synthase that produces ATP from ADP in the presence of a proton gradient across the membrane. The B chain is a regulatory subunit. In Methanosarcina acetivorans (strain ATCC 35395 / DSM 2834 / JCM 12185 / C2A), this protein is A-type ATP synthase subunit B.